The following is a 251-amino-acid chain: Zinc import ATP-binding protein ZnuC (251 aa).

The region spanning 5–220 (VSLENVSVSF…PEFISMFGPR (216 aa)) is the ABC transporter domain. Residue 37 to 44 (GPNGAGKS) participates in ATP binding.

This sequence belongs to the ABC transporter superfamily. Zinc importer (TC 3.A.1.15.5) family. The complex is composed of two ATP-binding proteins (ZnuC), two transmembrane proteins (ZnuB) and a solute-binding protein (ZnuA).

It localises to the cell inner membrane. The enzyme catalyses Zn(2+)(out) + ATP(in) + H2O(in) = Zn(2+)(in) + ADP(in) + phosphate(in) + H(+)(in). Its function is as follows. Part of the ABC transporter complex ZnuABC involved in zinc import. Responsible for energy coupling to the transport system. In Shigella flexneri serotype 5b (strain 8401), this protein is Zinc import ATP-binding protein ZnuC.